The primary structure comprises 474 residues: Trehalose-6-phosphate synthase (474 aa).

Arg-10 serves as a coordination point for D-glucose 6-phosphate. 22–23 is a UDP-alpha-D-glucose binding site; sequence GG. Positions 77 and 131 each coordinate D-glucose 6-phosphate. The UDP-alpha-D-glucose site is built by Arg-263 and Lys-268. Arg-301 contacts D-glucose 6-phosphate. UDP-alpha-D-glucose contacts are provided by residues Phe-340 and 366-370; that span reads LVAKE.

The protein belongs to the glycosyltransferase 20 family. As to quaternary structure, homotetramer.

It carries out the reaction D-glucose 6-phosphate + UDP-alpha-D-glucose = alpha,alpha-trehalose 6-phosphate + UDP + H(+). It functions in the pathway glycan biosynthesis; trehalose biosynthesis. Probably involved in the osmoprotection via the biosynthesis of trehalose. Catalyzes the transfer of glucose from UDP-alpha-D-glucose (UDP-Glc) to D-glucose 6-phosphate (Glc-6-P) to form trehalose-6-phosphate. Acts with retention of the anomeric configuration of the UDP-sugar donor. In Cronobacter sakazakii (strain ATCC BAA-894) (Enterobacter sakazakii), this protein is Trehalose-6-phosphate synthase.